The following is a 373-amino-acid chain: Transaldolase (373 aa).

Residue lysine 143 is the Schiff-base intermediate with substrate of the active site.

Belongs to the transaldolase family. Type 2 subfamily.

The protein localises to the cytoplasm. It carries out the reaction D-sedoheptulose 7-phosphate + D-glyceraldehyde 3-phosphate = D-erythrose 4-phosphate + beta-D-fructose 6-phosphate. It functions in the pathway carbohydrate degradation; pentose phosphate pathway; D-glyceraldehyde 3-phosphate and beta-D-fructose 6-phosphate from D-ribose 5-phosphate and D-xylulose 5-phosphate (non-oxidative stage): step 2/3. Transaldolase is important for the balance of metabolites in the pentose-phosphate pathway. The polypeptide is Transaldolase (Mycolicibacterium paratuberculosis (strain ATCC BAA-968 / K-10) (Mycobacterium paratuberculosis)).